We begin with the raw amino-acid sequence, 365 residues long: G-protein coupled receptor 68 (365 aa).

Residues 1–12 (MGNITTENSSLS) lie on the Extracellular side of the membrane. N-linked (GlcNAc...) asparagine glycosylation is found at Asn3 and Asn8. The helical transmembrane segment at 13–49 (CPIDHTIHQTLAPVVYVTVLVVGFPANCLSLYFGYLQ) threads the bilayer. Intrachain disulfides connect Cys13/Cys258 and Cys94/Cys172. At 50 to 53 (IKAR) the chain is on the cytoplasmic side. Residues 54–84 (NELGVYLCNLTIADLFYICSLPFWLQYVLQH) traverse the membrane as a helical segment. Residues 85-89 (DDWSH) lie on the Extracellular side of the membrane. Residues 90–125 (GDLSCQVCGILLYENIYISVGFLCCISIDRYLAVAH) form a helical membrane-spanning segment. Residues 126–133 (PFRFHQFR) lie on the Cytoplasmic side of the membrane. The helical transmembrane segment at 134 to 160 (TLKAAVGVSVLIWAKELLTSIYFLNHK) threads the bilayer. Topologically, residues 161-176 (EVIEDEDQHRVCFEHY) are extracellular. The extracellular loop 2 (ECL2) stretch occupies residues 161-176 (EVIEDEDQHRVCFEHY). The helical transmembrane segment at 177-214 (PIQAWQRSINYYRFLVGFLFPICLLLASYQGILRAVRR) threads the bilayer. Residues 215–218 (SHGT) lie on the Cytoplasmic side of the membrane. Residues 219-254 (QKSRKDQIQRLVLSTVVIFLACFLPYHVLLLVRSLW) traverse the membrane as a helical segment. Residues 255–260 (ERNCEF) lie on the Extracellular side of the membrane. The helical transmembrane segment at 261 to 289 (AKSIFNVYHFSLLLTSFNCVADPVLYCFV) threads the bilayer. Residues 290-365 (SETTHRDLAR…VGGPSTVGLA (76 aa)) are Cytoplasmic-facing.

This sequence belongs to the G-protein coupled receptor 1 family. Expressed in the lung, testis, heart, brain, spleen, thymus, brown fat, small intestine, colon, peripheral blood leukocytes, macrophages, stomach, ovary and white fat but not in the liver, kidney, and skeletal muscle. Expression in the prostate is weak but detectable. Specifically expressed in endothelial cells of small-diameter resistance arteries.

Its subcellular location is the cell membrane. With respect to regulation, activated by a network of residues that connects an extracellular-facing cavity to Glu-149, a conserved charged residue buried in the transmembrane core of the receptor. Protonation likely drives conformational changes in extracellular loop 2 (ECL2), which stabilizes movement of transmembrane 3 (TM3) and a series of rearrangements that connect the extracellular-facing cavity to Glu-149, a residue only conserved in proton-sensing G-protein coupled receptors. Activated in an allosteric manner by divalent metal ions at the extracellular surface following the order: Cd(2+) &gt; Co(2+) &gt; Ni(2+) &gt; Zn(2+) &gt; Fe(2+) &gt; Ca(2+) &gt; Mg(2+). Activated by ogerin (ZINC67740571), a selective GPR68 positive allosteric modulator. Inhibited by small molecule GPR68-I, decreasing inflammation in models of colitis. Proton-sensing G-protein coupled receptor activated by extracellular pH, which is required to monitor pH changes and generate adaptive reactions. The receptor is almost silent at pH 7.8 but fully activated at pH 6.8. Ligand binding causes a conformation change that triggers signaling via guanine nucleotide-binding proteins (G proteins) and modulates the activity of downstream effectors, such as phospholipase C. GPR68 is mainly coupled to G(q) G proteins and mediates production of diacylglycerol (DAG) and inositol 1,4,5-trisphosphate (IP3). Acts as a key mechanosensor of fluid shear stress and membrane stretch. Expressed in endothelial cells of small-diameter resistance arteries, where it mediates flow-induced dilation in response to shear stress. May represents an osteoblastic pH sensor regulating cell-mediated responses to acidosis in bone. Acts as a regulator of calcium-sensing receptor CASR in a seesaw manner: GPR68-mediated signaling inhibits CASR signaling in response to protons, while CASR inhibits GPR68 in presence of extracellular calcium. Also functions as a metastasis suppressor gene in prostate cancer. This Mus musculus (Mouse) protein is G-protein coupled receptor 68.